The sequence spans 208 residues: Imidazoleglycerol-phosphate dehydratase (208 aa).

It belongs to the imidazoleglycerol-phosphate dehydratase family.

It localises to the cytoplasm. It carries out the reaction D-erythro-1-(imidazol-4-yl)glycerol 3-phosphate = 3-(imidazol-4-yl)-2-oxopropyl phosphate + H2O. It participates in amino-acid biosynthesis; L-histidine biosynthesis; L-histidine from 5-phospho-alpha-D-ribose 1-diphosphate: step 6/9. The chain is Imidazoleglycerol-phosphate dehydratase from Pseudarthrobacter chlorophenolicus (strain ATCC 700700 / DSM 12829 / CIP 107037 / JCM 12360 / KCTC 9906 / NCIMB 13794 / A6) (Arthrobacter chlorophenolicus).